Reading from the N-terminus, the 172-residue chain is Protein 3 (172 aa).

This Northern cereal mosaic virus (NCMV) protein is Protein 3 (3).